The sequence spans 305 residues: Protoheme IX farnesyltransferase 1 (305 aa).

Helical transmembrane passes span 30 to 50, 59 to 79, 108 to 128, 129 to 149, 154 to 176, 180 to 202, 232 to 252, 253 to 273, and 284 to 304; these read IGIV…AFQF, LDVI…SGAM, FVLT…FAAS, FAAG…YSMW, HVSN…FAAV, LGPG…FYAL, LFWI…GIGF, LTLA…GFTA, and FIYS…FAVF.

It belongs to the UbiA prenyltransferase family. Protoheme IX farnesyltransferase subfamily. In terms of assembly, interacts with CtaA.

It localises to the cell membrane. The catalysed reaction is heme b + (2E,6E)-farnesyl diphosphate + H2O = Fe(II)-heme o + diphosphate. The protein operates within porphyrin-containing compound metabolism; heme O biosynthesis; heme O from protoheme: step 1/1. Its function is as follows. Converts heme B (protoheme IX) to heme O by substitution of the vinyl group on carbon 2 of heme B porphyrin ring with a hydroxyethyl farnesyl side group. In Lysinibacillus sphaericus (strain C3-41), this protein is Protoheme IX farnesyltransferase 1.